The chain runs to 337 residues: Dihydroorotate dehydrogenase (quinone) (337 aa).

Residues 62–66 (AGLDK) and Thr86 contribute to the FMN site. Lys66 provides a ligand contact to substrate. Residue 111 to 115 (NRFGF) coordinates substrate. Asn139 and Asn172 together coordinate FMN. A substrate-binding site is contributed by Asn172. Catalysis depends on Ser175, which acts as the Nucleophile. Asn177 serves as a coordination point for substrate. FMN is bound by residues Lys217 and Thr245. 246–247 (NT) contributes to the substrate binding site. FMN-binding positions include Gly268, Gly297, and 318–319 (YS).

Belongs to the dihydroorotate dehydrogenase family. Type 2 subfamily. As to quaternary structure, monomer. It depends on FMN as a cofactor.

It localises to the cell membrane. The enzyme catalyses (S)-dihydroorotate + a quinone = orotate + a quinol. The protein operates within pyrimidine metabolism; UMP biosynthesis via de novo pathway; orotate from (S)-dihydroorotate (quinone route): step 1/1. Catalyzes the conversion of dihydroorotate to orotate with quinone as electron acceptor. The protein is Dihydroorotate dehydrogenase (quinone) of Methylobacillus flagellatus (strain ATCC 51484 / DSM 6875 / VKM B-1610 / KT).